Consider the following 73-residue polypeptide: uncharacterized protein (73 aa).

This is an uncharacterized protein from Escherichia coli (strain K12).